A 518-amino-acid polypeptide reads, in one-letter code: ATP synthase subunit alpha (518 aa).

Gly-169–Thr-176 contacts ATP.

This sequence belongs to the ATPase alpha/beta chains family. In terms of assembly, F-type ATPases have 2 components, CF(1) - the catalytic core - and CF(0) - the membrane proton channel. CF(1) has five subunits: alpha(3), beta(3), gamma(1), delta(1), epsilon(1). CF(0) has three main subunits: a(1), b(2) and c(9-12). The alpha and beta chains form an alternating ring which encloses part of the gamma chain. CF(1) is attached to CF(0) by a central stalk formed by the gamma and epsilon chains, while a peripheral stalk is formed by the delta and b chains.

The protein resides in the cell membrane. It catalyses the reaction ATP + H2O + 4 H(+)(in) = ADP + phosphate + 5 H(+)(out). Its function is as follows. Produces ATP from ADP in the presence of a proton gradient across the membrane. The alpha chain is a regulatory subunit. The polypeptide is ATP synthase subunit alpha (Enterococcus hirae (strain ATCC 9790 / DSM 20160 / JCM 8729 / LMG 6399 / NBRC 3181 / NCIMB 6459 / NCDO 1258 / NCTC 12367 / WDCM 00089 / R)).